The chain runs to 315 residues: Methionyl-tRNA formyltransferase (315 aa).

The tract at residues 2–189 is N-terminal domain; that stretch reads SDSLRIIFAG…LITTLKQLAD (188 aa). 113–116 contacts (6S)-5,6,7,8-tetrahydrofolate; sequence SLLP. The C-terminal domain stretch occupies residues 210 to 315; it reads KEEARIDWSL…EWFIPGNRLA (106 aa).

It belongs to the Fmt family.

It carries out the reaction L-methionyl-tRNA(fMet) + (6R)-10-formyltetrahydrofolate = N-formyl-L-methionyl-tRNA(fMet) + (6S)-5,6,7,8-tetrahydrofolate + H(+). In terms of biological role, attaches a formyl group to the free amino group of methionyl-tRNA(fMet). The formyl group appears to play a dual role in the initiator identity of N-formylmethionyl-tRNA by promoting its recognition by IF2 and preventing the misappropriation of this tRNA by the elongation apparatus. The sequence is that of Methionyl-tRNA formyltransferase from Salmonella typhi.